Here is a 359-residue protein sequence, read N- to C-terminus: MSLEPTLRDLLHSKLQWIFVGGKGGVGKTTTSCALATLFASTPVHDAVTNTTRPRRVLLISTDPAHNLSDAFSQKFGKTPVPVNGMEETLFAMEVDPTTFTHGGFGAMLGFPGHIATDADAPSPFAALGNILKEAAGTLPGIDELSVFAEILRGVQQLSYDVVIFDTAPTGHTLRLLALPHTLNSTMEKLLSVEGLNTLIQAASAVLSSTTNLGDMSSLMPAFKQWRENVQEVQRQFTDAEKTAFICVCIPEFLSVYETERLVQELMKYDISCDSIVVNQLVLKPSSEPDCRMCNARQKIQSKYLAQIDSLYEDFHVVKMPLLSDEVRGVPALQRFAQFLLEPYDADRHGYIDVCGAAS.

23 to 30 serves as a coordination point for ATP; that stretch reads KGGVGKTT. The active site involves Asp63. Glu252 and Asn279 together coordinate ATP. Zn(2+) is bound by residues Cys291 and Cys294.

It belongs to the arsA ATPase family. As to quaternary structure, homodimer.

Its subcellular location is the cytoplasm. It is found in the endoplasmic reticulum. In terms of biological role, ATPase required for the post-translational delivery of tail-anchored (TA) proteins to the endoplasmic reticulum. Recognizes and selectively binds the transmembrane domain of TA proteins in the cytosol. This complex then targets to the endoplasmic reticulum by membrane-bound receptors, where the tail-anchored protein is released for insertion. This process is regulated by ATP binding and hydrolysis. ATP binding drives the homodimer towards the closed dimer state, facilitating recognition of newly synthesized TA membrane proteins. ATP hydrolysis is required for insertion. Subsequently, the homodimer reverts towards the open dimer state, lowering its affinity for the membrane-bound receptor, and returning it to the cytosol to initiate a new round of targeting. This is ATPase ASNA1 homolog from Trypanosoma cruzi (strain CL Brener).